A 97-amino-acid chain; its full sequence is Small ribosomal subunit protein bS6 (97 aa).

It belongs to the bacterial ribosomal protein bS6 family.

In terms of biological role, binds together with bS18 to 16S ribosomal RNA. This chain is Small ribosomal subunit protein bS6, found in Listeria innocua serovar 6a (strain ATCC BAA-680 / CLIP 11262).